A 793-amino-acid chain; its full sequence is Caldesmon (793 aa).

At Arg12 the chain carries Phosphoserine. Glu21 is subject to Phosphotyrosine. Disordered regions lie at residues 26-94, 108-407, and 434-458; these read AYQR…DDEA, QKRL…IKGE, and KKQGEEKGTKVQAKREKLQEDKPTF. The interval 26–207 is myosin and calmodulin-binding; the sequence is AYQRNDDDEE…PKRGSIGENQ (182 aa). Residues 47–56 are compositionally biased toward basic and acidic residues; that stretch reads QERLRQKQEE. Polar residues predominate over residues 60 to 74; it reads GQVTDQVEVNAQNSV. Residues 108 to 122 are compositionally biased toward basic and acidic residues; it reads QKRLQEALERQKEFD. A Phosphoserine modification is found at Ser129. Basic and acidic residues-rich tracts occupy residues 146-162 and 173-188; these read TTEKEEKSESRQERYEI and QKNDWRDAEENKKEDK. A phosphoserine mark is found at Glu196 and Ser202. Residues Ile203 and Glu209 each participate in a glycyl lysine isopeptide (Lys-Gly) (interchain with G-Cter in SUMO2) cross-link. 2 stretches are compositionally biased toward basic and acidic residues: residues 236-407 and 435-458; these read EEPK…IKGE and KQGEEKGTKVQAKREKLQEDKPTF. 3 consecutive repeat copies span residues 319 to 332, 333 to 346, and 347 to 360. The tract at residues 319 to 375 is 3 X 14 AA tandem repeats of E-E-E-K-R-A-A-E-E-R-Q-R-I-K; sequence EEEKRAAEERQRIKEEEKRAAEERQRIKEEEKRAAEERQRIKEEEKRAAEERQRARA. Lys459 is covalently cross-linked (Glycyl lysine isopeptide (Lys-Gly) (interchain with G-Cter in SUMO2)). The interval 492–640 is disordered; it reads KSQNGEFMTH…KKPFKCFTPK (149 aa). Basic and acidic residues-rich tracts occupy residues 532-558 and 566-633; these read AGKRLEELRRRRGETESEEFEKLKQKQ and EELK…DKKP. Residues 564-621 form a tropomyosin-binding region; that stretch reads ELEELKKKREERRKVLEEEEQRRKQEEADRKLREEEEKRRLKEEIERRRAEAAEKRQK. Ser643 carries the post-translational modification Phosphoserine. Lys645 participates in a covalent cross-link: Glycyl lysine isopeptide (Lys-Gly) (interchain with G-Cter in SUMO2). A strong actin-binding region spans residues 653–686; it reads LNKSVQKSSGVKSTHQAAIVSKIDSRLEQYTSAI. Position 656 is a phosphoserine (Ser656). Positions 664–674 are tropomyosin-binding; sequence KSTHQAAIVSK. Disordered regions lie at residues 687–706, 721–740, and 747–793; these read EGTKSAKPTKPAASDLPVPA, VFSSPTAAGTPNKETAGLKV, and NEWL…PTKV. Residues 716 to 722 form a calmodulin-binding region; the sequence is WEKGNVF. Residues 721–733 show a composition bias toward polar residues; that stretch reads VFSSPTAAGTPNK. A Phosphoserine modification is found at Ser724. Thr730 and Thr753 each carry phosphothreonine. The residue at position 759 (Ser759) is a Phosphoserine. Basic and acidic residues predominate over residues 765–784; it reads SDLRPGDVSSKRNLWEKQSV. The interval 768–793 is weak actin-binding; the sequence is RPGDVSSKRNLWEKQSVDKVTSPTKV. At Ser789 the chain carries Phosphoserine.

The protein belongs to the caldesmon family. In non-muscle cells, phosphorylation by CDK1 during mitosis causes caldesmon to dissociate from microfilaments. Phosphorylation reduces caldesmon binding to actin, myosin, and calmodulin as well as its inhibition of actomyosin ATPase activity. Phosphorylation also occurs in both quiescent and dividing smooth muscle cells with similar effects on the interaction with actin and calmodulin and on microfilaments reorganization. CDK1-mediated phosphorylation promotes Schwann cell migration during peripheral nerve regeneration. High-molecular-weight caldesmon (isoform 1) is predominantly expressed in smooth muscles, whereas low-molecular-weight caldesmon (isoforms 2, 3, 4 and 5) are widely distributed in non-muscle tissues and cells. Not expressed in skeletal muscle or heart.

It is found in the cytoplasm. The protein localises to the cytoskeleton. It localises to the myofibril. Its subcellular location is the stress fiber. Its function is as follows. Actin- and myosin-binding protein implicated in the regulation of actomyosin interactions in smooth muscle and nonmuscle cells (could act as a bridge between myosin and actin filaments). Stimulates actin binding of tropomyosin which increases the stabilization of actin filament structure. In muscle tissues, inhibits the actomyosin ATPase by binding to F-actin. This inhibition is attenuated by calcium-calmodulin and is potentiated by tropomyosin. Interacts with actin, myosin, two molecules of tropomyosin and with calmodulin. Also plays an essential role during cellular mitosis and receptor capping. Involved in Schwann cell migration during peripheral nerve regeneration. This Homo sapiens (Human) protein is Caldesmon (CALD1).